A 357-amino-acid chain; its full sequence is Probable cinnamyl alcohol dehydrogenase 2 (357 aa).

Cysteine 47 serves as a coordination point for Zn(2+). Serine 49 serves as a coordination point for NADP(+). The Zn(2+) site is built by histidine 69, glutamate 70, cysteine 100, cysteine 103, cysteine 106, cysteine 114, and cysteine 163. NADP(+) contacts are provided by residues threonine 167, 188 to 193 (GLGGVG), 211 to 216 (SSSDKK), threonine 251, glycine 275, and 298 to 300 (SFI).

This sequence belongs to the zinc-containing alcohol dehydrogenase family. Homodimer. Requires Zn(2+) as cofactor.

It catalyses the reaction (E)-cinnamyl alcohol + NADP(+) = (E)-cinnamaldehyde + NADPH + H(+). It carries out the reaction (E)-coniferol + NADP(+) = (E)-coniferaldehyde + NADPH + H(+). The enzyme catalyses (E)-sinapyl alcohol + NADP(+) = (E)-sinapaldehyde + NADPH + H(+). The catalysed reaction is (E)-4-coumaroyl alcohol + NADP(+) = (E)-4-coumaraldehyde + NADPH + H(+). It catalyses the reaction (E)-caffeyl alcohol + NADP(+) = (E)-caffeyl aldehyde + NADPH + H(+). It functions in the pathway aromatic compound metabolism; phenylpropanoid biosynthesis. Functionally, involved in lignin biosynthesis. Catalyzes the final step specific for the production of lignin monomers. Catalyzes the NADPH-dependent reduction of coniferaldehyde, 5-hydroxyconiferaldehyde, sinapaldehyde, 4-coumaraldehyde and caffeyl aldehyde to their respective alcohols. This chain is Probable cinnamyl alcohol dehydrogenase 2 (CAD2), found in Picea abies (Norway spruce).